Reading from the N-terminus, the 96-residue chain is MLKTQTLEQTKLSEPKMYKVILLNDDVTTMDFVIEILMNIFHQNLEKASQTMLEIHHNGSGICGIYTQEIALSKQKKVIDAAKLANFPLQAKVEEE.

Belongs to the ClpS family. As to quaternary structure, binds to the N-terminal domain of the chaperone ClpA.

Functionally, involved in the modulation of the specificity of the ClpAP-mediated ATP-dependent protein degradation. The protein is ATP-dependent Clp protease adapter protein ClpS of Campylobacter jejuni subsp. doylei (strain ATCC BAA-1458 / RM4099 / 269.97).